Reading from the N-terminus, the 108-residue chain is Malonate decarboxylase acyl carrier protein (108 aa).

S35 is subject to O-(phosphoribosyl dephospho-coenzyme A)serine.

This sequence belongs to the MdcC family. Covalently binds the prosthetic group of malonate decarboxylase.

The protein localises to the cytoplasm. Its function is as follows. Subunit of malonate decarboxylase, it is an acyl carrier protein to which acetyl and malonyl thioester residues are bound via a 2'-(5''-phosphoribosyl)-3'-dephospho-CoA prosthetic group and turn over during the catalytic mechanism. In Burkholderia cepacia (Pseudomonas cepacia), this protein is Malonate decarboxylase acyl carrier protein.